The chain runs to 1492 residues: ATP-binding cassette sub-family C member 10 (1492 aa).

9 helical membrane-spanning segments follow: residues 32–52 (LVLS…YLGT), 70–90 (LAAS…VALP), 102–122 (VLAG…LWVL), 133–153 (PLAL…TVLW), 172–192 (LCLL…WAAP), 293–313 (LVGT…VGFL), 320–340 (LSHG…GAVL), 391–411 (LLNF…LAIT), and 414–434 (LLYQ…LLLV). The ABC transmembrane type-1 1 domain maps to 285–563 (YLALGLLKLV…FPWVINGLLE (279 aa)). Thr-463 is modified (phosphothreonine). At Ser-467 the chain carries Phosphoserine. 2 helical membrane passes run 507–527 (VYLW…TYVL) and 538–558 (FTAL…PWVI). In terms of domain architecture, ABC transporter 1 spans 598–824 (LELHGALFSW…VQAVPKAWAE (227 aa)). 633 to 640 (GKVGCGKS) contributes to the ATP binding site. Positions 825 to 860 (NGQESDSATAQSVQNPEKTKEGLEEEQSTSGRLLQE) are disordered. The span at 826–840 (GQESDSATAQSVQNP) shows a compositional bias: polar residues. 6 consecutive transmembrane segments (helical) span residues 875-895 (AYWK…LLLM), 933-953 (LFSP…VFPL), 974-994 (IAGV…AGTL), 1051-1071 (AGLL…LLLL), 1153-1173 (IRLQ…ALVQ), and 1182-1202 (GLVG…SGLV). Residues 885–1210 (ALAILFSLLL…LVSSFTQTEA (326 aa)) form the ABC transmembrane type-1 2 domain. An ABC transporter 2 domain is found at 1246 to 1479 (VEFQDVVLAY…PHSLFQQLLQ (234 aa)). 1280–1287 (GRTGSGKS) contributes to the ATP binding site.

The protein belongs to the ABC transporter superfamily. ABCC family. Conjugate transporter (TC 3.A.1.208) subfamily. In testis, localized to peritubular myoid cells, Leydig cells, along the basal membrane of Sertoli cells, moderately in the adluminal compartment of the seminiferous tubules, and in vascular endothelial cells. As to expression, specifically expressed in spleen. In terms of tissue distribution, widely expressed.

The protein localises to the cell membrane. It is found in the basolateral cell membrane. Its subcellular location is the basal cell membrane. The enzyme catalyses ATP + H2O + xenobioticSide 1 = ADP + phosphate + xenobioticSide 2.. It catalyses the reaction an S-substituted glutathione(in) + ATP + H2O = an S-substituted glutathione(out) + ADP + phosphate + H(+). It carries out the reaction 17beta-estradiol 17-O-(beta-D-glucuronate)(in) + ATP + H2O = 17beta-estradiol 17-O-(beta-D-glucuronate)(out) + ADP + phosphate + H(+). The catalysed reaction is leukotriene C4(in) + ATP + H2O = leukotriene C4(out) + ADP + phosphate + H(+). ATP-dependent transporter of the ATP-binding cassette (ABC) family that actively extrudes physiological compounds, and xenobiotics from cells. Lipophilic anion transporter that mediates ATP-dependent transport of glucuronide conjugates such as estradiol-17-beta-o-glucuronide and GSH conjugates such as leukotriene C4 (LTC4). May contribute to regulate the transport of organic compounds in testes across the blood-testis-barrier. Mediates multidrug resistance (MDR) in cancer cells by preventing the intracellular accumulation of certain antitumor drugs, such as, docetaxel and paclitaxel. Does not transport glycocholic acid, taurocholic acid, MTX, folic acid, cAMP, or cGMP. This chain is ATP-binding cassette sub-family C member 10 (ABCC10), found in Homo sapiens (Human).